The chain runs to 509 residues: Maturase K (509 aa).

Belongs to the intron maturase 2 family. MatK subfamily.

It is found in the plastid. It localises to the chloroplast. Its function is as follows. Usually encoded in the trnK tRNA gene intron. Probably assists in splicing its own and other chloroplast group II introns. The protein is Maturase K of Nicotiana clevelandii (Wild tobacco).